Here is a 234-residue protein sequence, read N- to C-terminus: Peptidase E (234 aa).

Catalysis depends on charge relay system residues serine 123, aspartate 138, and histidine 160.

The protein belongs to the peptidase S51 family.

The protein localises to the cytoplasm. It catalyses the reaction Dipeptidase E catalyzes the hydrolysis of dipeptides Asp-|-Xaa. It does not act on peptides with N-terminal Glu, Asn or Gln, nor does it cleave isoaspartyl peptides.. Its function is as follows. Hydrolyzes dipeptides containing N-terminal aspartate residues. May play a role in allowing the cell to use peptide aspartate to spare carbon otherwise required for the synthesis of the aspartate family of amino acids. In Actinobacillus pleuropneumoniae serotype 5b (strain L20), this protein is Peptidase E.